The chain runs to 155 residues: Transcriptional repressor NrdR (155 aa).

A zinc finger lies at 3–34; it reads CPFCGNIDTQVKDSRPAEDHVSIRRRRFCPAC. Positions 49 to 139 constitute an ATP-cone domain; sequence LVVIKSSGKR…VYKNFQAADD (91 aa).

It belongs to the NrdR family. Zn(2+) is required as a cofactor.

In terms of biological role, negatively regulates transcription of bacterial ribonucleotide reductase nrd genes and operons by binding to NrdR-boxes. This chain is Transcriptional repressor NrdR, found in Cereibacter sphaeroides (strain ATCC 17029 / ATH 2.4.9) (Rhodobacter sphaeroides).